The chain runs to 564 residues: Proline--tRNA ligase (564 aa).

Belongs to the class-II aminoacyl-tRNA synthetase family. ProS type 1 subfamily. Homodimer.

It localises to the cytoplasm. It catalyses the reaction tRNA(Pro) + L-proline + ATP = L-prolyl-tRNA(Pro) + AMP + diphosphate. In terms of biological role, catalyzes the attachment of proline to tRNA(Pro) in a two-step reaction: proline is first activated by ATP to form Pro-AMP and then transferred to the acceptor end of tRNA(Pro). As ProRS can inadvertently accommodate and process non-cognate amino acids such as alanine and cysteine, to avoid such errors it has two additional distinct editing activities against alanine. One activity is designated as 'pretransfer' editing and involves the tRNA(Pro)-independent hydrolysis of activated Ala-AMP. The other activity is designated 'posttransfer' editing and involves deacylation of mischarged Ala-tRNA(Pro). The misacylated Cys-tRNA(Pro) is not edited by ProRS. The chain is Proline--tRNA ligase from Bacillus velezensis (strain DSM 23117 / BGSC 10A6 / LMG 26770 / FZB42) (Bacillus amyloliquefaciens subsp. plantarum).